A 148-amino-acid chain; its full sequence is UPF0208 membrane protein HD_1715 (148 aa).

The next 2 membrane-spanning stretches (helical) occupy residues 41–60 and 66–88; these read AARF…YFFT and ILAN…LYWL.

This sequence belongs to the UPF0208 family.

The protein localises to the cell inner membrane. The polypeptide is UPF0208 membrane protein HD_1715 (Haemophilus ducreyi (strain 35000HP / ATCC 700724)).